The sequence spans 651 residues: Mitogen-activated protein kinase kinase kinase 3 (651 aa).

One can recognise a Protein kinase domain in the interval 68–330 (WRKGELIGCG…ATELLQHPFV (263 aa)). ATP is bound by residues 74 to 82 (IGCGAFGRV) and K97. The stretch at 105–130 (SASKEKTQGHIRELEEEVQLLKNLSH) forms a coiled coil. Glycyl lysine isopeptide (Lys-Gly) (interchain with G-Cter in ubiquitin) cross-links involve residues K108 and K110. The active-site Proton acceptor is the D196. The disordered stretch occupies residues 573 to 608 (MPSPLKSSKRTLNTSRVMQSGTEPTQVNESTKKGVN). Over residues 582-608 (RTLNTSRVMQSGTEPTQVNESTKKGVN) the composition is skewed to polar residues. Residues 618-641 (RKWEEELYEELERHRENLRHAGAG) are a coiled coil.

It belongs to the protein kinase superfamily. STE Ser/Thr protein kinase family. MAP kinase kinase kinase subfamily. In terms of assembly, interacts with NACK2 and MKK6. Expressed in roots and flowers.

The protein resides in the cytoplasm. The protein localises to the cytoskeleton. It carries out the reaction L-seryl-[protein] + ATP = O-phospho-L-seryl-[protein] + ADP + H(+). The enzyme catalyses L-threonyl-[protein] + ATP = O-phospho-L-threonyl-[protein] + ADP + H(+). Involved in cortical microtubules organization and stabilization by regulating the phosphorylation state of microtubule-associated proteins such as MAP65-1. This is Mitogen-activated protein kinase kinase kinase 3 (ANP3) from Arabidopsis thaliana (Mouse-ear cress).